Reading from the N-terminus, the 66-residue chain is Large ribosomal subunit protein bL35 (66 aa).

This sequence belongs to the bacterial ribosomal protein bL35 family.

This is Large ribosomal subunit protein bL35 from Hyphomonas neptunium (strain ATCC 15444).